The primary structure comprises 199 residues: Dephospho-CoA kinase (199 aa).

In terms of domain architecture, DPCK spans 3–199; that stretch reads ILGLTGSIGM…EVVKMPQRRA (197 aa). 11–16 is a binding site for ATP; sequence GMGKST.

This sequence belongs to the CoaE family.

The protein resides in the cytoplasm. The enzyme catalyses 3'-dephospho-CoA + ATP = ADP + CoA + H(+). Its pathway is cofactor biosynthesis; coenzyme A biosynthesis; CoA from (R)-pantothenate: step 5/5. Its function is as follows. Catalyzes the phosphorylation of the 3'-hydroxyl group of dephosphocoenzyme A to form coenzyme A. The chain is Dephospho-CoA kinase from Bradyrhizobium diazoefficiens (strain JCM 10833 / BCRC 13528 / IAM 13628 / NBRC 14792 / USDA 110).